The primary structure comprises 634 residues: Probable potassium transport system protein Kup 1 (634 aa).

12 helical membrane passes run 20–40, 64–84, 110–130, 148–168, 176–196, 224–244, 256–276, 290–310, 348–368, 377–397, 405–425, and 430–450; these read FLTL…TSPL, VMSL…VLLI, FAAI…DAII, PVFD…LFVV, VAAW…LGGI, AGLL…ALYA, FAWF…QGAM, FLFP…ATII, IYIP…VFAF, AYGI…YFVM, VATS…FLMA, and IFEG…VMIT.

This sequence belongs to the HAK/KUP transporter (TC 2.A.72) family.

It localises to the cell inner membrane. It catalyses the reaction K(+)(in) + H(+)(in) = K(+)(out) + H(+)(out). Functionally, transport of potassium into the cell. Likely operates as a K(+):H(+) symporter. The chain is Probable potassium transport system protein Kup 1 from Rhodopseudomonas palustris (strain BisB5).